Here is a 91-residue protein sequence, read N- to C-terminus: Elongation factor 1-beta (91 aa).

This sequence belongs to the EF-1-beta/EF-1-delta family.

Its function is as follows. Promotes the exchange of GDP for GTP in EF-1-alpha/GDP, thus allowing the regeneration of EF-1-alpha/GTP that could then be used to form the ternary complex EF-1-alpha/GTP/AAtRNA. In Thermococcus kodakarensis (strain ATCC BAA-918 / JCM 12380 / KOD1) (Pyrococcus kodakaraensis (strain KOD1)), this protein is Elongation factor 1-beta.